Here is a 427-residue protein sequence, read N- to C-terminus: ATP-dependent RNA helicase DDX39A (427 aa).

Residues 1-19 (MAEQDVENELLDYDEDEEP) are compositionally biased toward acidic residues. Residues 1 to 36 (MAEQDVENELLDYDEDEEPQAPQESTPAPPKKDVKG) form a disordered region. Residue alanine 2 is modified to N-acetylalanine. Lysine 31 participates in a covalent cross-link: Glycyl lysine isopeptide (Lys-Gly) (interchain with G-Cter in SUMO2). Lysine 35 carries the N6-acetyllysine; alternate modification. A Glycyl lysine isopeptide (Lys-Gly) (interchain with G-Cter in SUMO2); alternate cross-link involves residue lysine 35. Residue serine 37 is modified to Phosphoserine. Positions 44–72 (SGFRDFLLKPELLRAIVDCGFEHPSEVQH) match the Q motif motif. One can recognise a Helicase ATP-binding domain in the interval 75–248 (IPQAILGMDV…RKFMQDPMEV (174 aa)). Residue 88–95 (AKSGMGKT) coordinates ATP. Residues lysine 154 and lysine 162 each participate in a glycyl lysine isopeptide (Lys-Gly) (interchain with G-Cter in SUMO2) cross-link. Threonine 171 bears the Phosphothreonine mark. Residues 195–198 (DECD) carry the DECD box motif. Residues lysine 240 and lysine 255 each participate in a glycyl lysine isopeptide (Lys-Gly) (interchain with G-Cter in SUMO2) cross-link. The Helicase C-terminal domain maps to 260–421 (GLQQYYVKLK…ELPEEIDIST (162 aa)). The residue at position 426 (serine 426) is a Phosphoserine.

The protein belongs to the DEAD box helicase family. DECD subfamily. Binds ALYREF/THOC4 and DDX39B/BAT1. Interacts with the apo-AREX complex component SARNP. Interacts with MX1. Interacts with MCM3AP isoform GANP. Interacts with ECD. Interacts with PHAX; this interaction stimulates PHAX RNA binding activity. SUMOylated by RANBP2; SUMOylation modification affects its ability to bind RNA.

It is found in the nucleus. Its subcellular location is the cytoplasm. It carries out the reaction ATP + H2O = ADP + phosphate + H(+). Helicase that plays an essential role in mRNA export and is involved in multiple steps in RNA metabolism including alternative splicing. Regulates nuclear mRNA export to the cytoplasm through association with ECD. Also involved in spliceosomal uridine-rich small nuclear RNA (U snRNA) export by stimulating the RNA binding of adapter PHAX. Plays a role in the negative regulation of type I IFN production by increasing the nuclear retention of antiviral transcripts and thus reducing their protein expression. Independently of the interferon pathway, plays an antiviral role against alphaviruses by binding to a 5' conserved sequence element in the viral genomic RNA. This is ATP-dependent RNA helicase DDX39A from Mus musculus (Mouse).